The following is a 290-amino-acid chain: Diaminopimelate epimerase (290 aa).

Substrate contacts are provided by N17, Q49, and N69. C78 serves as the catalytic Proton donor. Substrate contacts are provided by residues 79-80 (GN), N166, N199, and 217-218 (ER). C226 serves as the catalytic Proton acceptor. 227 to 228 (GS) contributes to the substrate binding site.

This sequence belongs to the diaminopimelate epimerase family. As to quaternary structure, homodimer.

It localises to the cytoplasm. It catalyses the reaction (2S,6S)-2,6-diaminopimelate = meso-2,6-diaminopimelate. It participates in amino-acid biosynthesis; L-lysine biosynthesis via DAP pathway; DL-2,6-diaminopimelate from LL-2,6-diaminopimelate: step 1/1. Functionally, catalyzes the stereoinversion of LL-2,6-diaminopimelate (L,L-DAP) to meso-diaminopimelate (meso-DAP), a precursor of L-lysine and an essential component of the bacterial peptidoglycan. This chain is Diaminopimelate epimerase, found in Nitrobacter hamburgensis (strain DSM 10229 / NCIMB 13809 / X14).